Here is a 766-residue protein sequence, read N- to C-terminus: 5-methyltetrahydropteroyltriglutamate--homocysteine methyltransferase (766 aa).

5-methyltetrahydropteroyltri-L-glutamate contacts are provided by residues 23-26 (RELK) and K121. L-homocysteine-binding positions include 438 to 440 (IGS) and E491. L-methionine-binding positions include 438-440 (IGS) and E491. 5-methyltetrahydropteroyltri-L-glutamate is bound by residues 522-523 (RC) and W568. Position 606 (D606) interacts with L-homocysteine. D606 lines the L-methionine pocket. E612 contacts 5-methyltetrahydropteroyltri-L-glutamate. Zn(2+)-binding residues include H648, C650, and E672. H701 acts as the Proton donor in catalysis. Position 733 (C733) interacts with Zn(2+).

Belongs to the vitamin-B12 independent methionine synthase family. It depends on Zn(2+) as a cofactor.

The enzyme catalyses 5-methyltetrahydropteroyltri-L-glutamate + L-homocysteine = tetrahydropteroyltri-L-glutamate + L-methionine. Its pathway is amino-acid biosynthesis; L-methionine biosynthesis via de novo pathway; L-methionine from L-homocysteine (MetE route): step 1/1. Functionally, catalyzes the transfer of a methyl group from 5-methyltetrahydrofolate to homocysteine resulting in methionine formation. This chain is 5-methyltetrahydropteroyltriglutamate--homocysteine methyltransferase, found in Photobacterium profundum (strain SS9).